Here is a 393-residue protein sequence, read N- to C-terminus: tRNA-specific 2-thiouridylase MnmA (393 aa).

Residues 19-26 (AMSGGVDS) and leucine 45 contribute to the ATP site. Cysteine 113 acts as the Nucleophile in catalysis. Residues cysteine 113 and cysteine 210 are joined by a disulfide bond. Glycine 137 provides a ligand contact to ATP. An interaction with tRNA region spans residues 160 to 162 (RDQ). Cysteine 210 serves as the catalytic Cysteine persulfide intermediate.

Belongs to the MnmA/TRMU family.

It localises to the cytoplasm. It catalyses the reaction S-sulfanyl-L-cysteinyl-[protein] + uridine(34) in tRNA + AH2 + ATP = 2-thiouridine(34) in tRNA + L-cysteinyl-[protein] + A + AMP + diphosphate + H(+). Catalyzes the 2-thiolation of uridine at the wobble position (U34) of tRNA, leading to the formation of s(2)U34. The protein is tRNA-specific 2-thiouridylase MnmA of Bradyrhizobium diazoefficiens (strain JCM 10833 / BCRC 13528 / IAM 13628 / NBRC 14792 / USDA 110).